The sequence spans 194 residues: Holliday junction branch migration complex subunit RuvA (194 aa).

The domain I stretch occupies residues 1-64 (MIGRLRGILA…EDSVSLYGFL (64 aa)). The interval 65 to 140 (REGERRLFRD…RAADFSSGAP (76 aa)) is domain II. The flexible linker stretch occupies residues 140–144 (PITGQ). The domain III stretch occupies residues 145–194 (LGPDAVSEATVALQQLGYKPAEAARMAREAGAEGDEVATVIRKALQAALR).

This sequence belongs to the RuvA family. As to quaternary structure, homotetramer. Forms an RuvA(8)-RuvB(12)-Holliday junction (HJ) complex. HJ DNA is sandwiched between 2 RuvA tetramers; dsDNA enters through RuvA and exits via RuvB. An RuvB hexamer assembles on each DNA strand where it exits the tetramer. Each RuvB hexamer is contacted by two RuvA subunits (via domain III) on 2 adjacent RuvB subunits; this complex drives branch migration. In the full resolvosome a probable DNA-RuvA(4)-RuvB(12)-RuvC(2) complex forms which resolves the HJ.

It localises to the cytoplasm. The RuvA-RuvB-RuvC complex processes Holliday junction (HJ) DNA during genetic recombination and DNA repair, while the RuvA-RuvB complex plays an important role in the rescue of blocked DNA replication forks via replication fork reversal (RFR). RuvA specifically binds to HJ cruciform DNA, conferring on it an open structure. The RuvB hexamer acts as an ATP-dependent pump, pulling dsDNA into and through the RuvAB complex. HJ branch migration allows RuvC to scan DNA until it finds its consensus sequence, where it cleaves and resolves the cruciform DNA. This Xanthomonas campestris pv. campestris (strain 8004) protein is Holliday junction branch migration complex subunit RuvA.